Reading from the N-terminus, the 801-residue chain is Cadherin-20 (801 aa).

Positions 1 to 34 (MWTTGRMSNAKSWLGLGTSLYFWALMDLATTVLS) are cleaved as a signal peptide. A propeptide spanning residues 35-59 (STPMPEVELDTLFSGKPQSHQRSRR) is cleaved from the precursor. The Extracellular portion of the chain corresponds to 60–619 (SWVWNQFFVL…AYMLPVSLSR (560 aa)). 5 consecutive Cadherin domains span residues 61 to 165 (WVWN…EPKF), 166 to 274 (LDGP…PPRF), 275 to 389 (PQKH…PPVF), 390 to 494 (EPRF…APEF), and 494 to 610 (FPRF…SPEA). N-linked (GlcNAc...) asparagine glycosylation occurs at asparagine 261. Asparagine 420, asparagine 461, and asparagine 542 each carry an N-linked (GlcNAc...) asparagine glycan. A helical membrane pass occupies residues 620–640 (GALIAILACVFVLLVLVLLIL). At 641-801 (SMRRHRKQPY…GASEGPSPLW (161 aa)) the chain is on the cytoplasmic side.

The protein resides in the cell membrane. Its function is as follows. Cadherins are calcium-dependent cell adhesion proteins. They preferentially interact with themselves in a homophilic manner in connecting cells; cadherins may thus contribute to the sorting of heterogeneous cell types. The polypeptide is Cadherin-20 (Cdh20) (Rattus norvegicus (Rat)).